The sequence spans 323 residues: Protoheme IX farnesyltransferase (323 aa).

8 consecutive transmembrane segments (helical) span residues 50–70 (IVLI…ANTF), 97–117 (NRDA…WLWL), 118–138 (LCDS…YIFV), 150–170 (NIVW…AVIV), 184–204 (AIVL…ALAM), 231–248 (IVWY…LIPA), 252–274 (IYAA…LHLG), and 293–313 (YLAV…ETIG).

It belongs to the UbiA prenyltransferase family. Protoheme IX farnesyltransferase subfamily.

The protein localises to the cell membrane. It catalyses the reaction heme b + (2E,6E)-farnesyl diphosphate + H2O = Fe(II)-heme o + diphosphate. Its pathway is porphyrin-containing compound metabolism; heme O biosynthesis; heme O from protoheme: step 1/1. Its function is as follows. Converts heme B (protoheme IX) to heme O by substitution of the vinyl group on carbon 2 of heme B porphyrin ring with a hydroxyethyl farnesyl side group. This Corynebacterium glutamicum (strain R) protein is Protoheme IX farnesyltransferase.